A 213-amino-acid chain; its full sequence is Pyrrolidone-carboxylate peptidase (213 aa).

Residues Glu-81, Cys-144, and His-166 contribute to the active site.

This sequence belongs to the peptidase C15 family. As to quaternary structure, homodimer.

The protein resides in the cytoplasm. It carries out the reaction Release of an N-terminal pyroglutamyl group from a polypeptide, the second amino acid generally not being Pro.. In terms of biological role, removes 5-oxoproline from various penultimate amino acid residues except L-proline. This Pseudomonas fluorescens protein is Pyrrolidone-carboxylate peptidase (pcp).